The following is a 202-amino-acid chain: Nascent polypeptide-associated complex subunit alpha (202 aa).

Residues 1 to 19 (MADPRVEELPDEEVPKTNV) are compositionally biased toward basic and acidic residues. The segment at 1–42 (MADPRVEELPDEEVPKTNVEDAGSSSESEAGDEPTIPGGAAV) is disordered. Residues 46 to 111 (SRNEKKARKA…AKIEDLNATA (66 aa)) enclose the NAC-A/B domain. Over residues 117–126 (QQLAEAAANE) the composition is skewed to low complexity. Residues 117 to 165 (QQLAEAAANEHAGHDHEHDHGKGKAPEAEAKKEEEEDDGEEVDESGLEA) are disordered. Positions 127-149 (HAGHDHEHDHGKGKAPEAEAKKE) are enriched in basic and acidic residues. Positions 150–162 (EEEDDGEEVDESG) are enriched in acidic residues. In terms of domain architecture, UBA spans 163 to 202 (LEAKDIELVMAQANVSRKKAVKALRENDNDIVNSIMALSI).

Belongs to the NAC-alpha family. As to quaternary structure, part of the nascent polypeptide-associated complex (NAC), consisting of egd2 and egd1. NAC associates with ribosomes via egd1.

The protein localises to the cytoplasm. Its subcellular location is the nucleus. Component of the nascent polypeptide-associated complex (NAC), a dynamic component of the ribosomal exit tunnel, protecting the emerging polypeptides from interaction with other cytoplasmic proteins to ensure appropriate nascent protein targeting. The NAC complex also promotes mitochondrial protein import by enhancing productive ribosome interactions with the outer mitochondrial membrane and blocks the inappropriate interaction of ribosomes translating non-secretory nascent polypeptides with translocation sites in the membrane of the endoplasmic reticulum. Egd2 may also be involved in transcription regulation. The protein is Nascent polypeptide-associated complex subunit alpha (egd2) of Aspergillus niger (strain ATCC MYA-4892 / CBS 513.88 / FGSC A1513).